Here is a 407-residue protein sequence, read N- to C-terminus: Arginine deiminase (407 aa).

Residue Cys397 is the Amidino-cysteine intermediate of the active site.

Belongs to the arginine deiminase family.

It is found in the cytoplasm. The enzyme catalyses L-arginine + H2O = L-citrulline + NH4(+). It functions in the pathway amino-acid degradation; L-arginine degradation via ADI pathway; carbamoyl phosphate from L-arginine: step 1/2. This Escherichia coli O6:H1 (strain CFT073 / ATCC 700928 / UPEC) protein is Arginine deiminase (arcA).